A 370-amino-acid polypeptide reads, in one-letter code: DNA replication and repair protein RecF (370 aa).

30–37 (GENAQGKT) is a binding site for ATP.

This sequence belongs to the RecF family.

The protein resides in the cytoplasm. In terms of biological role, the RecF protein is involved in DNA metabolism; it is required for DNA replication and normal SOS inducibility. RecF binds preferentially to single-stranded, linear DNA. It also seems to bind ATP. This Listeria innocua serovar 6a (strain ATCC BAA-680 / CLIP 11262) protein is DNA replication and repair protein RecF.